Consider the following 402-residue polypeptide: Phosphoglycerate kinase (402 aa).

Substrate contacts are provided by residues 24-26 (DFN), Arg-40, 63-66 (HFGR), Arg-122, and Arg-155. ATP-binding positions include Lys-206, Gly-297, Glu-328, and 358–361 (GGDS).

Belongs to the phosphoglycerate kinase family. Monomer.

The protein localises to the cytoplasm. It carries out the reaction (2R)-3-phosphoglycerate + ATP = (2R)-3-phospho-glyceroyl phosphate + ADP. Its pathway is carbohydrate degradation; glycolysis; pyruvate from D-glyceraldehyde 3-phosphate: step 2/5. This chain is Phosphoglycerate kinase, found in Prochlorococcus marinus (strain MIT 9312).